The chain runs to 741 residues: Cytosolic phospholipase A2 (741 aa).

One can recognise a C2 domain in the interval 1 to 116 (MSNIIVEHQY…KVAQMEHVTL (116 aa)). Residues 1-172 (MSNIIVEHQY…IKKLLKMENP (172 aa)) form a phospholipid binding region. Ca(2+)-binding residues include Asp-34, Thr-35, Asp-37, Asn-59, Asp-87, Ala-88, and Asn-89. A PLA2c domain is found at 132–729 (VCASTDLRFS…SLSEIENKKF (598 aa)). Residue Ser-223 is the Nucleophile of the active site. The interval 406–453 (TSSSTMEEELEQIKPEHIVGDDSADNEEETQRGGTESADAEDERQRHA) is disordered. A compositionally biased stretch (basic and acidic residues) spans 416 to 425 (EQIKPEHIVG). Ser-498 is subject to Phosphoserine; by MAPK. The active-site Proton acceptor is Asp-540.

In terms of processing, activated by phosphorylation on a serine residue.

The protein localises to the cytoplasm. Its subcellular location is the cytoplasmic vesicle. It catalyses the reaction a 1,2-diacyl-sn-glycero-3-phosphocholine + H2O = a 1-acyl-sn-glycero-3-phosphocholine + a fatty acid + H(+). It carries out the reaction a 1-acyl-sn-glycero-3-phosphocholine + H2O = sn-glycerol 3-phosphocholine + a fatty acid + H(+). Its activity is regulated as follows. Stimulated by agonists such as ATP, EGF, thrombin and bradykinin as well as by cytosolic Ca(2+). Selectively hydrolyzes arachidonyl phospholipids in the sn-2 position releasing arachidonic acid. Together with its lysophospholipid activity, it is implicated in the initiation of the inflammatory response. This Danio rerio (Zebrafish) protein is Cytosolic phospholipase A2 (pla2g4a).